We begin with the raw amino-acid sequence, 108 residues long: T cell receptor alpha variable 1-1 (108 aa).

Positions 1-18 (MWGAFLLYVSMKMGGTAG) are cleaved as a signal peptide. In terms of domain architecture, Ig-like spans 19–108 (QSLEQPSEVT…DSASYFCAVR (90 aa)). The N-linked (GlcNAc...) asparagine glycan is linked to asparagine 38. Residues cysteine 39 and cysteine 105 are joined by a disulfide bond.

As to quaternary structure, alpha-beta TR is a heterodimer composed of an alpha and beta chain; disulfide-linked. The alpha-beta TR is associated with the transmembrane signaling CD3 coreceptor proteins to form the TR-CD3 (TcR or TCR). The assembly of alpha-beta TR heterodimers with CD3 occurs in the endoplasmic reticulum where a single alpha-beta TR heterodimer associates with one CD3D-CD3E heterodimer, one CD3G-CD3E heterodimer and one CD247 homodimer forming a stable octameric structure. CD3D-CD3E and CD3G-CD3E heterodimers preferentially associate with TR alpha and TR beta chains, respectively. The association of the CD247 homodimer is the last step of TcR assembly in the endoplasmic reticulum and is required for transport to the cell surface.

Its subcellular location is the cell membrane. V region of the variable domain of T cell receptor (TR) alpha chain that participates in the antigen recognition. Alpha-beta T cell receptors are antigen specific receptors which are essential to the immune response and are present on the cell surface of T lymphocytes. Recognize peptide-major histocompatibility (MH) (pMH) complexes that are displayed by antigen presenting cells (APC), a prerequisite for efficient T cell adaptive immunity against pathogens. Binding of alpha-beta TR to pMH complex initiates TR-CD3 clustering on the cell surface and intracellular activation of LCK that phosphorylates the ITAM motifs of CD3G, CD3D, CD3E and CD247 enabling the recruitment of ZAP70. In turn ZAP70 phosphorylates LAT, which recruits numerous signaling molecules to form the LAT signalosome. The LAT signalosome propagates signal branching to three major signaling pathways, the calcium, the mitogen-activated protein kinase (MAPK) kinase and the nuclear factor NF-kappa-B (NF-kB) pathways, leading to the mobilization of transcription factors that are critical for gene expression and essential for T cell growth and differentiation. The T cell repertoire is generated in the thymus, by V-(D)-J rearrangement. This repertoire is then shaped by intrathymic selection events to generate a peripheral T cell pool of self-MH restricted, non-autoaggressive T cells. Post-thymic interaction of alpha-beta TR with the pMH complexes shapes TR structural and functional avidity. The sequence is that of T cell receptor alpha variable 1-1 from Homo sapiens (Human).